Reading from the N-terminus, the 310-residue chain is Ornithine carbamoyltransferase (310 aa).

Carbamoyl phosphate contacts are provided by residues 56–59 (STRT), glutamine 83, arginine 107, and 134–137 (HPCQ). Residues asparagine 165, aspartate 229, and 233–234 (SM) contribute to the L-ornithine site. Carbamoyl phosphate-binding positions include 269–270 (CL) and arginine 297.

The protein belongs to the aspartate/ornithine carbamoyltransferase superfamily. OTCase family.

The protein resides in the cytoplasm. It catalyses the reaction carbamoyl phosphate + L-ornithine = L-citrulline + phosphate + H(+). The protein operates within amino-acid biosynthesis; L-arginine biosynthesis; L-arginine from L-ornithine and carbamoyl phosphate: step 1/3. In terms of biological role, reversibly catalyzes the transfer of the carbamoyl group from carbamoyl phosphate (CP) to the N(epsilon) atom of ornithine (ORN) to produce L-citrulline. This is Ornithine carbamoyltransferase from Symbiobacterium thermophilum (strain DSM 24528 / JCM 14929 / IAM 14863 / T).